A 166-amino-acid chain; its full sequence is uncharacterized protein (166 aa).

A disordered region spans residues 25–116 (PEEPPLWVPP…QGADEVHSQH (92 aa)). The residue at position 105 (Ser-105) is a Phosphoserine.

This is an uncharacterized protein from Rattus norvegicus (Rat).